We begin with the raw amino-acid sequence, 388 residues long: MAESNFVDYVKIYCRSGKGGRGSTHMRREKYCPNGGPDGGDGGRGGHIILRGNRNYWTLLHLKYDRHAMAGHGESGSKNRSFGKDGADKVIEVPCGTVVYNAETGEYLCDVTDDGQEVILLKGGRGGQGNSHFKTATRQAPRFAQPGEPMQEMTVIMELKLLADVGLVGFPNAGKSTLLSAISAAKPKIADYPFTTLEPNLGIVSYRDGKSFVMADIPGIIEGASQGKGLGLRFLRHIERNSLLLFMVPADSDDIRKEYEVLLNELRTFNPEMLDKQRVLAITKSDMLDQELMDEIEPTLPEGVPHIFISSVSGLGISVLKDILWEELNKESNKIEDIVHRPKDVTRLQQELKDMGEDEELDYEYEEDADDEDDDLDYEYEEEDWEEK.

Residues Ser4–Leu162 enclose the Obg domain. The OBG-type G domain occupies Ala163–Asn329. GTP-binding positions include Gly169 to Ser176, Phe194 to Glu198, Asp216 to Gly219, Thr283 to Asp286, and Ser310 to Val312. The Mg(2+) site is built by Ser176 and Thr196. The tract at residues Leu352 to Lys388 is disordered. Acidic residues predominate over residues Gly356–Lys388.

This sequence belongs to the TRAFAC class OBG-HflX-like GTPase superfamily. OBG GTPase family. As to quaternary structure, monomer. Mg(2+) serves as cofactor.

The protein resides in the cytoplasm. Its function is as follows. An essential GTPase which binds GTP, GDP and possibly (p)ppGpp with moderate affinity, with high nucleotide exchange rates and a fairly low GTP hydrolysis rate. Plays a role in control of the cell cycle, stress response, ribosome biogenesis and in those bacteria that undergo differentiation, in morphogenesis control. This chain is GTPase Obg, found in Bacteroides thetaiotaomicron (strain ATCC 29148 / DSM 2079 / JCM 5827 / CCUG 10774 / NCTC 10582 / VPI-5482 / E50).